Here is a 521-residue protein sequence, read N- to C-terminus: MHDSPPFKVIIVGAGVTGLTLAHCLVKAGIDYALLDKGVVAPGFGTTITLQPHGCRILHQLGCLDAVLAKCDVMGGASCRDPNGKIFTSNDFFGVVRKFAGYDTRTLDRQVFLHELYELLPDKSKVYEKARVEEIIEENSTTRVILADGREFAGDLVVGADGVHSKVREIMWDKANAAHPGMITVEEKRAMVTQYNAIVMASSPVPGISAHDMEVTSNDNYSFLLLCQPDWISIIVHSKLPDDQQCTWPTRRRYTETDMEELVSKIIERPVTGSVVFGELWKRRLKAQMISLEEGVLSHWTFGRIALAGDAVHKVTPNSALGGNTAMEDAVVIANTLHALLAMHPNKKPSDVEVRDAMREKYQNTRVDRARAIVKAGGDLTRQQAYDGWKAYIKQRWLTPIIGLDTLAQKIAGLCVTAPKLAYVDFDERRGILGWQDTLAAEKERESKTQVKVPIKQKKGLSWSTWNGGFEAIVPQILVLWAGLWLAICFFHLVFSGNHVPGFGSEVARFFTVYNETWMHS.

The signal sequence occupies residues 1 to 22; it reads MHDSPPFKVIIVGAGVTGLTLA. The FAD site is built by Asp36 and Arg109. 2 N-linked (GlcNAc...) asparagine glycosylation sites follow: Asn139 and Asn220. Positions 310 and 323 each coordinate FAD. A helical transmembrane segment spans residues 477–497; sequence ILVLWAGLWLAICFFHLVFSG. N-linked (GlcNAc...) asparagine glycosylation is present at Asn515.

Belongs to the paxM FAD-dependent monooxygenase family. FAD serves as cofactor.

It localises to the membrane. It functions in the pathway polyketide biosynthesis. Functionally, part of the gene cluster that mediates the biosynthesis of depudecin, a highly oxidized eleven-carbon linear polyketide that acts as a histone deacetylase (HDAC) inhibitor and makes a small contribution to pathogenesis. The reducing polyketide synthase DEP5 is the central enzyme in depudecin biosynthesis by yielding the backbone polyketide chain. The monooxygenases DEP2 and DEP4, as well as the uncharacterized protein DEP1, then act as tailoring enzymes to modify the intermediate polyketide chain into depudecin. In Fusarium langsethiae, this protein is FAD-dependent monooxygenase DEP2.